Reading from the N-terminus, the 477-residue chain is Bifunctional protein HldE (477 aa).

The interval 1 to 318 (MKVTLSEFER…ENAVRGRADT (318 aa)) is ribokinase. The residue at position 179 (lysine 179) is an N6-acetyllysine. 195–198 (NLSE) contributes to the ATP binding site. The active site involves aspartate 264. The segment at 344–477 (MTNGVFDILH…IKKIQQDKKG (134 aa)) is cytidylyltransferase.

The protein in the N-terminal section; belongs to the carbohydrate kinase PfkB family. It in the C-terminal section; belongs to the cytidylyltransferase family. As to quaternary structure, homodimer.

The catalysed reaction is D-glycero-beta-D-manno-heptose 7-phosphate + ATP = D-glycero-beta-D-manno-heptose 1,7-bisphosphate + ADP + H(+). It catalyses the reaction D-glycero-beta-D-manno-heptose 1-phosphate + ATP + H(+) = ADP-D-glycero-beta-D-manno-heptose + diphosphate. It participates in nucleotide-sugar biosynthesis; ADP-L-glycero-beta-D-manno-heptose biosynthesis; ADP-L-glycero-beta-D-manno-heptose from D-glycero-beta-D-manno-heptose 7-phosphate: step 1/4. Its pathway is nucleotide-sugar biosynthesis; ADP-L-glycero-beta-D-manno-heptose biosynthesis; ADP-L-glycero-beta-D-manno-heptose from D-glycero-beta-D-manno-heptose 7-phosphate: step 3/4. Its function is as follows. Catalyzes the phosphorylation of D-glycero-D-manno-heptose 7-phosphate at the C-1 position to selectively form D-glycero-beta-D-manno-heptose-1,7-bisphosphate. Functionally, catalyzes the ADP transfer from ATP to D-glycero-beta-D-manno-heptose 1-phosphate, yielding ADP-D-glycero-beta-D-manno-heptose. This Shigella boydii serotype 18 (strain CDC 3083-94 / BS512) protein is Bifunctional protein HldE.